A 560-amino-acid polypeptide reads, in one-letter code: DNA ligase B (560 aa).

The N6-AMP-lysine intermediate role is filled by Lys-124.

It belongs to the NAD-dependent DNA ligase family. LigB subfamily.

The catalysed reaction is NAD(+) + (deoxyribonucleotide)n-3'-hydroxyl + 5'-phospho-(deoxyribonucleotide)m = (deoxyribonucleotide)n+m + AMP + beta-nicotinamide D-nucleotide.. Functionally, catalyzes the formation of phosphodiester linkages between 5'-phosphoryl and 3'-hydroxyl groups in double-stranded DNA using NAD as a coenzyme and as the energy source for the reaction. The sequence is that of DNA ligase B from Shigella sonnei (strain Ss046).